The following is a 213-amino-acid chain: MERIKLAEKIISTCREMNASGLNQGTSGNVSARYTGGMLITPSGIAYSKMTPDMIVFVDDKGKPEAGKIPSSEWLIHLACYKARPELNAVIHTHAVNSTAVAIHNHSIPAIHYMVAVSGTDHIPCIPYYTFGSPELADGVSKGIRESKSLLMQHHGMLAMDVTLEKTLWLAGETETLADLYIKCGGLHHDVPVLSEAEMTIVLEKFKTYGLKA.

The Proton donor/acceptor role is filled by Glu-73. Glu-73, His-92, His-94, and His-155 together coordinate Co(2+).

The protein belongs to the aldolase class II family. Co(2+) serves as cofactor.

It carries out the reaction 5-(methylsulfanyl)-D-ribulose 1-phosphate = 2-(methylsulfanyl)acetaldehyde + dihydroxyacetone phosphate. The enzyme catalyses 5-deoxy-D-ribulose 1-phosphate = dihydroxyacetone phosphate + acetaldehyde. It participates in amino-acid biosynthesis; L-methionine biosynthesis via salvage pathway. In terms of biological role, uses 5-methylthioribulose-1-phosphate to yield 2-(methylthio)acetaldehyde and dihydroxyacetone phosphate. Can also use 5-deoxyribulose 1-phosphate to yield acetaldehyde and dihydroxyacetone phosphate. Part of a bifunctional DHAP-shunt salvage pathway for SAM by-products. This Escherichia coli O45:K1 (strain S88 / ExPEC) protein is 5-methylthioribulose-1-phosphate/5-deoxyribulose-1-phosphate aldolase.